The sequence spans 402 residues: Enoyl-[acyl-carrier-protein] reductase [NADH] (402 aa).

NAD(+)-binding positions include 48–53 (GASSGY), 74–75 (FE), 111–112 (DA), and 140–141 (LA). Position 226 (tyrosine 226) interacts with substrate. Tyrosine 236 functions as the Proton donor in the catalytic mechanism. NAD(+)-binding positions include lysine 245 and 274-276 (VVT).

It belongs to the TER reductase family. In terms of assembly, monomer.

The enzyme catalyses a 2,3-saturated acyl-[ACP] + NAD(+) = a (2E)-enoyl-[ACP] + NADH + H(+). It catalyses the reaction a 2,3-saturated acyl-CoA + NAD(+) = a (2E)-enoyl-CoA + NADH + H(+). Its pathway is lipid metabolism; fatty acid biosynthesis. Involved in the final reduction of the elongation cycle of fatty acid synthesis (FAS II). Catalyzes the reduction of a carbon-carbon double bond in an enoyl moiety that is covalently linked to an acyl carrier protein (ACP). It can also use crotonyl-CoA. The polypeptide is Enoyl-[acyl-carrier-protein] reductase [NADH] (Xanthomonas oryzae pv. oryzae (strain MAFF 311018)).